The sequence spans 563 residues: BOS complex subunit NCLN (563 aa).

The signal sequence occupies residues 1–42 (MLEEAGEVLENVLKASCLPLGFIVFLPAVLLLVAPPLPAADA). Over 43 to 522 (AHEFTVYRMQ…VMNAYRVKPA (480 aa)) the chain is Lumenal. Asn241 and Asn428 each carry an N-linked (GlcNAc...) asparagine glycan. The chain crosses the membrane as a helical span at residues 523–543 (IFDLLLALCIGAYLGMAYTAV). Over 544 to 563 (QHFHVLYKTVQRLLLKAKAQ) the chain is Cytoplasmic.

It belongs to the nicastrin family. As to quaternary structure, component of the back of Sec61 (BOS) complex, composed of NCLN/Nicalin, NOMO1 and TMEM147. The BOS complex is part of the multi-pass translocon (MPT) complex, composed of three subcomplexes, the GEL complex (composed of RAB5IF/OPTI and TMCO1), the BOS complex (composed of NCLN/Nicalin, NOMO1 and TMEM147) and the PAT complex (composed of WDR83OS/Asterix and CCDC47). The MPT complex associates with the SEC61 complex.

The protein resides in the endoplasmic reticulum membrane. In terms of biological role, component of the multi-pass translocon (MPT) complex that mediates insertion of multi-pass membrane proteins into the lipid bilayer of membranes. The MPT complex takes over after the SEC61 complex: following membrane insertion of the first few transmembrane segments of proteins by the SEC61 complex, the MPT complex occludes the lateral gate of the SEC61 complex to promote insertion of subsequent transmembrane regions. May antagonize Nodal signaling and subsequent organization of axial structures during mesodermal patterning, via its interaction with NOMO. The chain is BOS complex subunit NCLN (Ncln) from Mus musculus (Mouse).